We begin with the raw amino-acid sequence, 322 residues long: Cell division control protein 10 (322 aa).

Met-1 bears the N-acetylmethionine mark. The region spanning 29–302 (KGFQFNIMVV…EGFRARQLIA (274 aa)) is the Septin-type G domain. Residues 39–46 (GQSGLGKS) form a G1 motif region. GTP is bound by residues 39–46 (GQSGLGKS), Thr-74, Gly-100, and 180–188 (KSDTLTLDE). The tract at residues 97 to 100 (DTPG) is G3 motif. Residues 179–182 (GKSD) form a G4 motif region. Position 216 is a phosphothreonine (Thr-216). Positions 236 and 251 each coordinate GTP.

This sequence belongs to the TRAFAC class TrmE-Era-EngA-EngB-Septin-like GTPase superfamily. Septin GTPase family. Component of the septin complex which consists of CDC3, CDC10, CDC11, CDC12 and probably SHS1 and rearranges to a cortical collar of highly ordered filaments at the mother-bud-neck. A complex formed by CDC3, CDC10, CDC11 and CDC12 is capable of forming long filaments in vitro and the components seem to be present in a 2:2:2:2 arrangement in vivo. The filaments are proposed to be formed by the end-to-end polymerization of CDC3-CDC12-CDC11 complexes with CDC10 serving as a bridge to bundle the polymers into paired filaments. Component of the GIN4 complex composed of at least BNI5, CDC3, CDC10, CDC11, CDC12, GIN4, NAP1 and SHS1. Self-associates. Interacts with SYP1.

Its subcellular location is the membrane. The protein resides in the bud neck. Septins are GTPases involved in cytokinesis that assemble early in the cell cycle as a patch at the incipient bud site and form a ring approximate 15 minutes before bud emergence, which transforms into an hour-glass shaped collar of cortical filaments that spans both sides of the mother-bud neck. This collar persists until just before cytokinesis, when it splits into two rings that occupy opposite sides of the neck. The septins at the bud neck serve as a structural scaffold that recruits different components involved in diverse processes at specific stages during the cell cycle. Many proteins bind asymmetrically to the septin collar. The septin assembly is regulated by protein kinases GIN4 and/or CLA4. May act by recruiting MYO1 and HOF1, a protein involved in septation, to the site of cleavage. Septins are also involved in cell morphogenesis, bud site selection, chitin deposition, cell cycle regulation, cell compartmentalization and spore wall formation. The protein is Cell division control protein 10 (CDC10) of Saccharomyces cerevisiae (strain ATCC 204508 / S288c) (Baker's yeast).